Reading from the N-terminus, the 694-residue chain is Nucleolin (694 aa).

Residues 1–277 are disordered; it reads MVKLAKTPKN…EAKKKKTETP (277 aa). Residues 26 to 40 are compositionally biased toward acidic residues; it reads ESEEEESSDLEESSG. Positions 46 to 108 are enriched in low complexity; that stretch reads PPKKQQKAAV…AVVGKGAKNG (63 aa). 5 tandem repeats follow at residues 55–61, 62–68, 69–75, 76–82, and 84–90. Positions 55 to 90 are 5 X 7 AA tandem repeats of X-T-P-X-K-K-X; sequence VTPAKKAATPAKKAATPAKKAVTPAKKAVATPAKKA. Phosphoserine is present on residues Ser116 and Ser136. Positions 116–142 are enriched in acidic residues; sequence SEEEDEDDEDDEEDEDEEEESDEEEEP. The span at 143–168 shows a compositional bias: low complexity; sequence AVPVKPAAKKSAAAVPAKKPAVVPAK. Ser171 carries the phosphoserine modification. The span at 171–194 shows a compositional bias: acidic residues; the sequence is SEEEEEEDDEEEDEEDDESEDEAM. Positions 196-213 are enriched in low complexity; the sequence is TTPAPVKKPTPAKATPAK. Over residues 218 to 246 the composition is skewed to acidic residues; sequence SEDEEDEEDEDEDEEDEDDEEEDEEESED. RRM domains follow at residues 281–357, 371–445, 461–535, and 553–628; these read FSLF…KAKS, RTLF…YTGE, KTLI…FSSP, and KTLF…FAKP. Residues 631 to 694 form a disordered region; the sequence is EFQRGGGFGG…KPQGKKIKFE (64 aa). The segment covering 633 to 680 has biased composition (gly residues); the sequence is QRGGGFGGGFGGRGGRGGRGGGRGGFGGRGGGRGFGGRGGGFRGGRGG. Basic and acidic residues predominate over residues 681 to 694; sequence GGDHKPQGKKIKFE.

In terms of processing, highly phosphorylated during mitosis.

The protein resides in the nucleus. The protein localises to the nucleolus. Nucleolin is the major nucleolar protein of growing eukaryotic cells. It is found associated with intranucleolar chromatin and pre-ribosomal particles. It induces chromatin decondensation by binding to histone H1. It is thought to play a role in pre-rRNA transcription and ribosome assembly. The polypeptide is Nucleolin (NCL) (Gallus gallus (Chicken)).